Consider the following 163-residue polypeptide: Globin CTT-Z (163 aa).

Positions 1-16 (MKFFAVLALCIVGAIA) are cleaved as a signal peptide. Positions 18–162 (PLTSDEAALV…VYTAVFQIVT (145 aa)) constitute a Globin domain. Residues histidine 76 and histidine 111 each coordinate heme b.

The protein belongs to the globin family.

The chain is Globin CTT-Z (CTT-Z) from Chironomus thummi thummi (Midge).